Reading from the N-terminus, the 273-residue chain is Dermonecrotic toxin LdSicTox-alphaIB3b (273 aa).

Histidine 5 is a catalytic residue. Mg(2+)-binding residues include glutamate 25 and aspartate 27. Catalysis depends on histidine 41, which acts as the Nucleophile. Intrachain disulfides connect cysteine 45–cysteine 51 and cysteine 47–cysteine 190. Aspartate 85 lines the Mg(2+) pocket.

Belongs to the arthropod phospholipase D family. Class II subfamily. The cofactor is Mg(2+). In terms of tissue distribution, expressed by the venom gland.

It localises to the secreted. It carries out the reaction an N-(acyl)-sphingosylphosphocholine = an N-(acyl)-sphingosyl-1,3-cyclic phosphate + choline. The enzyme catalyses an N-(acyl)-sphingosylphosphoethanolamine = an N-(acyl)-sphingosyl-1,3-cyclic phosphate + ethanolamine. The catalysed reaction is a 1-acyl-sn-glycero-3-phosphocholine = a 1-acyl-sn-glycero-2,3-cyclic phosphate + choline. It catalyses the reaction a 1-acyl-sn-glycero-3-phosphoethanolamine = a 1-acyl-sn-glycero-2,3-cyclic phosphate + ethanolamine. Its function is as follows. Dermonecrotic toxins cleave the phosphodiester linkage between the phosphate and headgroup of certain phospholipids (sphingolipid and lysolipid substrates), forming an alcohol (often choline) and a cyclic phosphate. This toxin acts on sphingomyelin (SM). It may also act on ceramide phosphoethanolamine (CPE), lysophosphatidylcholine (LPC) and lysophosphatidylethanolamine (LPE), but not on lysophosphatidylserine (LPS), and lysophosphatidylglycerol (LPG). It acts by transphosphatidylation, releasing exclusively cyclic phosphate products as second products. Induces dermonecrosis, hemolysis, increased vascular permeability, edema, inflammatory response, and platelet aggregation. This Loxosceles deserta (Desert recluse spider) protein is Dermonecrotic toxin LdSicTox-alphaIB3b.